A 379-amino-acid polypeptide reads, in one-letter code: GDP-mannose transporter 1 (379 aa).

Residues 1–39 (MTDNRKPEDYTIEMDKLGQNKNYQAPPPPPQPRSSTASS) lie on the Cytoplasmic side of the membrane. A disordered region spans residues 17–38 (LGQNKNYQAPPPPPQPRSSTAS). A helical transmembrane segment spans residues 40–60 (ISNNAALSVLAYCGSSILMTV). At 61–69 (MNKYVLSSD) the chain is on the lumenal side. A helical membrane pass occupies residues 70 to 90 (FNLNFFLLCVQSLVCIIAIQL). Residues 91 to 110 (CKACGLITYRDFNLDEARKW) lie on the Cytoplasmic side of the membrane. The chain crosses the membrane as a helical span at residues 111-133 (FPITLLLIGMIYTGSKALQFLSI). Residues 134-136 (PVY) lie on the Lumenal side of the membrane. Residues 137-156 (TIFKNLTIILIAYGEVLWFG) form a helical membrane-spanning segment. Residues 157–162 (GSVTNL) lie on the Cytoplasmic side of the membrane. Residues 163–182 (TLFSFGLMVFSSIIAAWADI) form a helical membrane-spanning segment. At 183–198 (KHAIESSGDATSKVST) the chain is on the lumenal side. The chain crosses the membrane as a helical span at residues 199 to 219 (LNAGYIWMLINCLCTSSYVLG). Residues 220–233 (MRKRIKLTNFKDFD) lie on the Cytoplasmic side of the membrane. Residues 234–254 (TMFYNNLLSIPVLIVCSGILE) traverse the membrane as a helical segment. The Lumenal segment spans residues 255–272 (DWSPANVARNFPSADRNG). The helical transmembrane segment at 273–293 (IMFAMILSGLSTVFISYTSAW) threads the bilayer. The Cytoplasmic segment spans residues 294-301 (CVRVTSST). A helical membrane pass occupies residues 302 to 322 (TYSMVGALNKLPIALSGLIFF). Over 323–325 (DAP) the chain is Lumenal. A helical transmembrane segment spans residues 326 to 346 (VTFPSVSAIMVGFVSGIVYAV). The Cytoplasmic portion of the chain corresponds to 347–379 (AKIKQNAKPKVGILPTTNPVSASSQSMRDSLRS).

The protein belongs to the TPT transporter family. SLC35D subfamily. As to quaternary structure, homooligomer.

It localises to the golgi apparatus membrane. The protein resides in the cytoplasmic vesicle membrane. The protein localises to the endoplasmic reticulum membrane. Its function is as follows. Involved in the import of GDP-mannose from the cytoplasm into the Golgi lumen. This is GDP-mannose transporter 1 (gmt1) from Emericella nidulans (strain FGSC A4 / ATCC 38163 / CBS 112.46 / NRRL 194 / M139) (Aspergillus nidulans).